Reading from the N-terminus, the 336-residue chain is Holliday junction branch migration complex subunit RuvB (336 aa).

The large ATPase domain (RuvB-L) stretch occupies residues 4 to 185 (MDERLLSGES…FGVLSRLEYY (182 aa)). ATP is bound by residues Leu-24, Arg-25, Gly-66, Lys-69, Thr-70, Thr-71, 132–134 (EDF), Arg-175, Tyr-185, and Arg-222. Thr-70 is a Mg(2+) binding site. The small ATPAse domain (RuvB-S) stretch occupies residues 186–256 (TVDQLSAIVE…ITQMALELLQ (71 aa)). Positions 259 to 336 (KLGLDHIDHK…EHFGMEMPKV (78 aa)) are head domain (RuvB-H). DNA contacts are provided by Arg-314 and Arg-319.

This sequence belongs to the RuvB family. As to quaternary structure, homohexamer. Forms an RuvA(8)-RuvB(12)-Holliday junction (HJ) complex. HJ DNA is sandwiched between 2 RuvA tetramers; dsDNA enters through RuvA and exits via RuvB. An RuvB hexamer assembles on each DNA strand where it exits the tetramer. Each RuvB hexamer is contacted by two RuvA subunits (via domain III) on 2 adjacent RuvB subunits; this complex drives branch migration. In the full resolvosome a probable DNA-RuvA(4)-RuvB(12)-RuvC(2) complex forms which resolves the HJ.

It localises to the cytoplasm. It carries out the reaction ATP + H2O = ADP + phosphate + H(+). Functionally, the RuvA-RuvB-RuvC complex processes Holliday junction (HJ) DNA during genetic recombination and DNA repair, while the RuvA-RuvB complex plays an important role in the rescue of blocked DNA replication forks via replication fork reversal (RFR). RuvA specifically binds to HJ cruciform DNA, conferring on it an open structure. The RuvB hexamer acts as an ATP-dependent pump, pulling dsDNA into and through the RuvAB complex. RuvB forms 2 homohexamers on either side of HJ DNA bound by 1 or 2 RuvA tetramers; 4 subunits per hexamer contact DNA at a time. Coordinated motions by a converter formed by DNA-disengaged RuvB subunits stimulates ATP hydrolysis and nucleotide exchange. Immobilization of the converter enables RuvB to convert the ATP-contained energy into a lever motion, pulling 2 nucleotides of DNA out of the RuvA tetramer per ATP hydrolyzed, thus driving DNA branch migration. The RuvB motors rotate together with the DNA substrate, which together with the progressing nucleotide cycle form the mechanistic basis for DNA recombination by continuous HJ branch migration. Branch migration allows RuvC to scan DNA until it finds its consensus sequence, where it cleaves and resolves cruciform DNA. The polypeptide is Holliday junction branch migration complex subunit RuvB (Bacillus cereus (strain ZK / E33L)).